We begin with the raw amino-acid sequence, 235 residues long: Small ribosomal subunit protein uS3 (235 aa).

One can recognise a KH type-2 domain in the interval valine 39–lysine 107. The tract at residues alanine 215–lysine 235 is disordered.

It belongs to the universal ribosomal protein uS3 family. In terms of assembly, part of the 30S ribosomal subunit. Forms a tight complex with proteins S10 and S14.

Its function is as follows. Binds the lower part of the 30S subunit head. Binds mRNA in the 70S ribosome, positioning it for translation. The sequence is that of Small ribosomal subunit protein uS3 from Haemophilus influenzae (strain ATCC 51907 / DSM 11121 / KW20 / Rd).